The following is a 275-amino-acid chain: tRNA pseudouridine synthase A (275 aa).

The active-site Nucleophile is D60. Residue Y119 participates in substrate binding.

Belongs to the tRNA pseudouridine synthase TruA family. Homodimer.

The catalysed reaction is uridine(38/39/40) in tRNA = pseudouridine(38/39/40) in tRNA. Functionally, formation of pseudouridine at positions 38, 39 and 40 in the anticodon stem and loop of transfer RNAs. In Synechocystis sp. (strain ATCC 27184 / PCC 6803 / Kazusa), this protein is tRNA pseudouridine synthase A.